Here is a 491-residue protein sequence, read N- to C-terminus: UDP-N-acetylmuramate--L-alanine ligase (491 aa).

Residue 126 to 132 (GTHGKTT) participates in ATP binding.

The protein belongs to the MurCDEF family.

The protein localises to the cytoplasm. The enzyme catalyses UDP-N-acetyl-alpha-D-muramate + L-alanine + ATP = UDP-N-acetyl-alpha-D-muramoyl-L-alanine + ADP + phosphate + H(+). The protein operates within cell wall biogenesis; peptidoglycan biosynthesis. Its function is as follows. Cell wall formation. The polypeptide is UDP-N-acetylmuramate--L-alanine ligase (Salmonella paratyphi C (strain RKS4594)).